Here is a 270-residue protein sequence, read N- to C-terminus: Chlorophyll a-b binding protein 7, chloroplastic (270 aa).

The N-terminal 42 residues, 1-42, are a transit peptide targeting the chloroplast; that stretch reads MASACASSTIAAVAFSSPSSRRNGSIVGTTKASFLGGRRLRV. Residue Trp-68 participates in chlorophyll b binding. Residues Phe-88, Glu-107, and His-110 each contribute to the chlorophyll a site. Arg-112 is a binding site for chlorophyll b. The chain crosses the membrane as a helical span at residues 113–133; the sequence is WAMLGAAGIFIPELLTKIGIL. Gln-144 provides a ligand contact to chlorophyll a. The helical transmembrane segment at 146-166 threads the bilayer; that stretch reads YFTDTTTLFIVELVLIGWAEG. Positions 155, 165, and 168 each coordinate chlorophyll b. Residues Lys-221, Glu-222, Asn-225, Arg-227, Gln-239, and His-254 each contribute to the chlorophyll a site. Residues 228–248 form a helical membrane-spanning segment; sequence LAMLAVMGAWFQHIYTGTGPI.

This sequence belongs to the light-harvesting chlorophyll a/b-binding (LHC) protein family. The LHC complex consists of chlorophyll a-b binding proteins. The cofactor is Binds at least 14 chlorophylls (8 Chl-a and 6 Chl-b) and carotenoids such as lutein and neoxanthin.. Photoregulated by reversible phosphorylation of its threonine residues.

It is found in the plastid. The protein resides in the chloroplast thylakoid membrane. Functionally, the light-harvesting complex (LHC) functions as a light receptor, it captures and delivers excitation energy to photosystems with which it is closely associated. This Solanum lycopersicum (Tomato) protein is Chlorophyll a-b binding protein 7, chloroplastic (CAB7).